The chain runs to 104 residues: Large ribosomal subunit protein bL21 (104 aa).

Belongs to the bacterial ribosomal protein bL21 family. In terms of assembly, part of the 50S ribosomal subunit. Contacts protein L20.

Its function is as follows. This protein binds to 23S rRNA in the presence of protein L20. The polypeptide is Large ribosomal subunit protein bL21 (Nitrosococcus oceani (strain ATCC 19707 / BCRC 17464 / JCM 30415 / NCIMB 11848 / C-107)).